The following is a 382-amino-acid chain: uncharacterized protein (382 aa).

A helical membrane pass occupies residues 1-21; sequence MKIILVVFVLIFVGVIGFNMI.

The protein belongs to the membrane fusion protein (MFP) (TC 8.A.1) family.

The protein resides in the membrane. This is an uncharacterized protein from Haemophilus influenzae (strain ATCC 51907 / DSM 11121 / KW20 / Rd).